The following is a 280-amino-acid chain: MSGLDDRKKLTHAKNRKPLNDIPKSAENRPNTRSTSSRRGAEKDVPITFIGSSRTVKADLPEFTNTRSRRPLHSESKKELSRNPVSRGEEHSSSLPKSSPESSVSVMSSNASLWSACTEEVNKIGVCAKRESRNLRVYKMKSFTSNMEQILSNDNQLAPTVIRILNSRNSWCLNSCHACLTFIMENITSDNYGKRSACLKALASITNSLLDTIIGFASTKTRRIGVDVVAEERAAKATECIHNFRKIVKNRDKIYKQIDQETIYKLDAILERLKKVSSHK.

The tract at residues 1–104 is disordered; the sequence is MSGLDDRKKL…LPKSSPESSV (104 aa). Over residues 72-92 the composition is skewed to basic and acidic residues; the sequence is LHSESKKELSRNPVSRGEEHS. The span at 93–104 shows a compositional bias: low complexity; the sequence is SSLPKSSPESSV.

Interacts with mei-1.

It is found in the cytoplasm. The protein localises to the cytoskeleton. It localises to the spindle pole. Functionally, forms a heterodimeric complex in conjunction with mei-1 which severs microtubules in vitro in an ATP-dependent manner. This activity may promote rapid reorganization of cellular microtubule arrays. May act to target mei-1 within the cell. Required specifically for meiotic spindle formation in the female germline. The polypeptide is Meiotic spindle formation protein 2 (mei-2) (Caenorhabditis elegans).